The following is a 399-amino-acid chain: Arginase (399 aa).

Residues histidine 193, aspartate 216, histidine 218, and aspartate 220 each coordinate Mn(2+). Residues 218–222 (HADIN), 229–231 (SGN), and aspartate 273 contribute to the substrate site. Aspartate 322 and aspartate 324 together coordinate Mn(2+). Residues threonine 336 and glutamate 367 each coordinate substrate.

The protein belongs to the arginase family. It depends on Mn(2+) as a cofactor.

It localises to the cytoplasm. It carries out the reaction L-arginine + H2O = urea + L-ornithine. It participates in nitrogen metabolism; urea cycle; L-ornithine and urea from L-arginine: step 1/1. This is Arginase (CAR1) from Eremothecium gossypii (strain ATCC 10895 / CBS 109.51 / FGSC 9923 / NRRL Y-1056) (Yeast).